The chain runs to 645 residues: MDGTVTLSPAPTDLPPVSSLDAGQPTLPPEAPLAMPEQSLREGSLQVRHQRTSPMGIGLRRFYLIGGTLTATAVAVWVMLSVLWPGGFSVLEGCLLGLFVLLFAWIAMSFASAVAGFITVVARAGRKLGIDPDAPLPSLHTRTALLMPTYNEDPRRLLAGLQAIYESVAETGQLEHFDFFVLSDTTREHIGRAEEQVYAELCDSVGGHGRIFYRRRADNAARKAGNVADWVRRFGGNYPQMLILDADSVMTGDTIVRLVAGMEDNPDVGLIQTLPAVVNGQTLFARMQQFGGRVYGPIIAFGVAWWHGAESNYWGHNAIIRTQAFADHAGLPSLRGRKPFGGHVLSHDFVEAALMRRGGWAMHMVPYLQGSYEEGPPTLTDLLVRDRRWCQGNLQHAKVVGAKGLHWISRMHMMIGIGHYFTAPMWGMLMLVGIGIPLAGAGIDLAQGLPFSPARYWHGSSDGNAIWIFVCTMFVLLAPKLLGYIALLLNPRERRACGGAIRAALSILLETVLAALMAPVVMYLQSRGVFEVLAGKDSGWDAQVRDDGKLSWPALIRSYGGLSVFGLFMGTLAYLVSPSLAAWMAPVIVGMVVSIPVVAVTSLRRTGLALRRAGIFCIPEELDPPKVLVRASELRRAAALEPSLI.

The interval 1–28 (MDGTVTLSPAPTDLPPVSSLDAGQPTLP) is disordered. 7 consecutive transmembrane segments (helical) span residues 64–84 (LIGGTLTATAVAVWVMLSVLW), 98–118 (LFVLLFAWIAMSFASAVAGFI), 423–443 (APMWGMLMLVGIGIPLAGAGI), 465–485 (AIWIFVCTMFVLLAPKLLGYI), 504–524 (ALSILLETVLAALMAPVVMYL), 558–578 (SYGGLSVFGLFMGTLAYLVSP), and 580–600 (LAAWMAPVIVGMVVSIPVVAV).

Belongs to the glycosyltransferase 2 family. OpgH subfamily.

Its subcellular location is the cell inner membrane. It participates in glycan metabolism; osmoregulated periplasmic glucan (OPG) biosynthesis. Its function is as follows. Involved in the biosynthesis of osmoregulated periplasmic glucans (OPGs). The protein is Glucans biosynthesis glucosyltransferase H of Xanthomonas campestris pv. campestris (strain 8004).